A 174-amino-acid chain; its full sequence is Secreted protein A (174 aa).

Positions 1–19 (MRLLITLFAIFALFNCSLA) are cleaved as a signal peptide. N156 carries N-linked (GlcNAc...) asparagine glycosylation.

It belongs to the Sct family. Probably contains disulfide bonds.

It is found in the secreted. The protein resides in the extracellular vesicle. This chain is Secreted protein A (p17), found in Dictyostelium discoideum (Social amoeba).